Consider the following 531-residue polypeptide: Zinc finger protein 837 (531 aa).

The interval 1–101 (MEAPAQKAGQ…CGPTSSQNPE (101 aa)) is disordered. Over residues 24–50 (AREKRPEEPRPLEEDRAGSRPTQKGDL) the composition is skewed to basic and acidic residues. 8 consecutive C2H2-type zinc fingers follow at residues 271–293 (YACD…QRIH), 299–321 (YECA…QKTH), 363–385 (YECA…RRVH), 391–413 (YACP…QRTH), 419–441 (YACP…QRAH), 447–469 (YGCS…ERLH), 475–497 (YICR…LRTH), and 503–525 (YACG…RKRH).

Belongs to the krueppel C2H2-type zinc-finger protein family.

The protein resides in the nucleus. Its function is as follows. May be involved in transcriptional regulation. The protein is Zinc finger protein 837 (ZNF837) of Homo sapiens (Human).